The primary structure comprises 360 residues: Phenylalanine--tRNA ligase alpha subunit (360 aa).

Glu-260 is a Mg(2+) binding site.

The protein belongs to the class-II aminoacyl-tRNA synthetase family. Phe-tRNA synthetase alpha subunit type 1 subfamily. Tetramer of two alpha and two beta subunits. Mg(2+) is required as a cofactor.

The protein resides in the cytoplasm. It catalyses the reaction tRNA(Phe) + L-phenylalanine + ATP = L-phenylalanyl-tRNA(Phe) + AMP + diphosphate + H(+). In Bradyrhizobium diazoefficiens (strain JCM 10833 / BCRC 13528 / IAM 13628 / NBRC 14792 / USDA 110), this protein is Phenylalanine--tRNA ligase alpha subunit.